Here is a 327-residue protein sequence, read N- to C-terminus: Malate dehydrogenase (327 aa).

12–18 (GAAGQIA) is a binding site for NAD(+). Residues Arg-93 and Arg-99 each coordinate substrate. Residues Asn-106, Gln-113, and 130-132 (VGN) each bind NAD(+). 2 residues coordinate substrate: Asn-132 and Arg-163. The active-site Proton acceptor is His-188.

It belongs to the LDH/MDH superfamily. MDH type 2 family.

The enzyme catalyses (S)-malate + NAD(+) = oxaloacetate + NADH + H(+). Functionally, catalyzes the reversible oxidation of malate to oxaloacetate. This chain is Malate dehydrogenase, found in Acidiphilium cryptum (strain JF-5).